A 205-amino-acid chain; its full sequence is Putative 3-methyladenine DNA glycosylase (205 aa).

Belongs to the DNA glycosylase MPG family.

The protein is Putative 3-methyladenine DNA glycosylase of Bacillus cereus (strain Q1).